A 114-amino-acid polypeptide reads, in one-letter code: uncharacterized protein (114 aa).

The Fe cation site is built by Cys40, Cys106, and Cys108.

The protein belongs to the HesB/IscA family. Ycf83 subfamily.

It is found in the plastid. The protein resides in the chloroplast. This is an uncharacterized protein from Pyropia yezoensis (Susabi-nori).